The primary structure comprises 728 residues: Elongation factor 2 (728 aa).

The tr-type G domain occupies 18–258 (KFIRNIGIVA…MVIRHLPSPI (241 aa)). GTP-binding positions include 27–34 (AHIDHGKT), 93–97 (DTPGH), and 147–150 (NKVD). Position 594 is a diphthamide (His594).

The protein belongs to the TRAFAC class translation factor GTPase superfamily. Classic translation factor GTPase family. EF-G/EF-2 subfamily.

It is found in the cytoplasm. In terms of biological role, catalyzes the GTP-dependent ribosomal translocation step during translation elongation. During this step, the ribosome changes from the pre-translocational (PRE) to the post-translocational (POST) state as the newly formed A-site-bound peptidyl-tRNA and P-site-bound deacylated tRNA move to the P and E sites, respectively. Catalyzes the coordinated movement of the two tRNA molecules, the mRNA and conformational changes in the ribosome. The chain is Elongation factor 2 (fusA) from Archaeoglobus fulgidus (strain ATCC 49558 / DSM 4304 / JCM 9628 / NBRC 100126 / VC-16).